A 182-amino-acid chain; its full sequence is Peptidyl-prolyl cis-trans isomerase H (182 aa).

Residues 15–181 enclose the PPIase cyclophilin-type domain; the sequence is FFDITIGGEP…LDVVISQCGE (167 aa).

This sequence belongs to the cyclophilin-type PPIase family. PPIase H subfamily.

It localises to the nucleus. The enzyme catalyses [protein]-peptidylproline (omega=180) = [protein]-peptidylproline (omega=0). In terms of biological role, PPIases accelerate the folding of proteins. It catalyzes the cis-trans isomerization of proline imidic peptide bonds in oligopeptides. The chain is Peptidyl-prolyl cis-trans isomerase H (CYP3) from Gibberella zeae (strain ATCC MYA-4620 / CBS 123657 / FGSC 9075 / NRRL 31084 / PH-1) (Wheat head blight fungus).